Here is a 179-residue protein sequence, read N- to C-terminus: Replication restart protein DnaT (179 aa).

Positions Gly-156–Gly-179 are disordered.

This sequence belongs to the DnaT family. In terms of assembly, homooligomerizes. Interacts with PriB. Component of the replication restart primosome. Primosome assembly occurs via a 'hand-off' mechanism. PriA binds to replication forks, subsequently PriB then DnaT bind; DnaT then displaces ssDNA to generate the helicase loading substrate.

Its function is as follows. Involved in the restart of stalled replication forks, which reloads the replicative helicase on sites other than the origin of replication. Can function in multiple replication restart pathways. Displaces ssDNA from a PriB-ssDNA complex. Probably forms a spiral filament on ssDNA. This chain is Replication restart protein DnaT, found in Escherichia coli O157:H7.